Here is a 156-residue protein sequence, read N- to C-terminus: Small ribosomal subunit protein uS7 (156 aa).

Belongs to the universal ribosomal protein uS7 family. As to quaternary structure, part of the 30S ribosomal subunit. Contacts proteins S9 and S11.

Its function is as follows. One of the primary rRNA binding proteins, it binds directly to 16S rRNA where it nucleates assembly of the head domain of the 30S subunit. Is located at the subunit interface close to the decoding center, probably blocks exit of the E-site tRNA. This chain is Small ribosomal subunit protein uS7, found in Campylobacter hominis (strain ATCC BAA-381 / DSM 21671 / CCUG 45161 / LMG 19568 / NCTC 13146 / CH001A).